The sequence spans 312 residues: Ribosomal protein L11 methyltransferase (312 aa).

The S-adenosyl-L-methionine site is built by T162, G183, D205, and N248.

It belongs to the methyltransferase superfamily. PrmA family.

The protein resides in the cytoplasm. The enzyme catalyses L-lysyl-[protein] + 3 S-adenosyl-L-methionine = N(6),N(6),N(6)-trimethyl-L-lysyl-[protein] + 3 S-adenosyl-L-homocysteine + 3 H(+). Functionally, methylates ribosomal protein L11. The polypeptide is Ribosomal protein L11 methyltransferase (Bacillus anthracis (strain A0248)).